The chain runs to 115 residues: Large ribosomal subunit protein bL19 (115 aa).

It belongs to the bacterial ribosomal protein bL19 family.

In terms of biological role, this protein is located at the 30S-50S ribosomal subunit interface and may play a role in the structure and function of the aminoacyl-tRNA binding site. This chain is Large ribosomal subunit protein bL19, found in Thermosipho africanus (strain TCF52B).